The chain runs to 194 residues: Probable nicotinate-nucleotide adenylyltransferase (194 aa).

The protein belongs to the NadD family.

It catalyses the reaction nicotinate beta-D-ribonucleotide + ATP + H(+) = deamido-NAD(+) + diphosphate. It participates in cofactor biosynthesis; NAD(+) biosynthesis; deamido-NAD(+) from nicotinate D-ribonucleotide: step 1/1. Functionally, catalyzes the reversible adenylation of nicotinate mononucleotide (NaMN) to nicotinic acid adenine dinucleotide (NaAD). The protein is Probable nicotinate-nucleotide adenylyltransferase of Brucella abortus (strain 2308).